Consider the following 868-residue polypeptide: Rifampicin phosphotransferase (868 aa).

An ATP-binding region spans residues Met1–Thr313. ATP contacts are provided by Lys22, Arg116, Gly131, Thr135, Gln182, Glu296, Gln308, and Arg310. The interval Asn326 to Lys756 is rifampicin-binding. Residues Gly769–Val867 form a swivel phosphohistidine region. Catalysis depends on His827, which acts as the Tele-phosphohistidine intermediate.

The protein belongs to the rifampicin phosphotransferase family.

The catalysed reaction is rifampicin + ATP + H2O = 21-phosphorifampicin + AMP + phosphate + 2 H(+). Catalyzes the phosphorylation of rifampicin, also known as rifampin (RIF), leading to its inactivation. Confers high level resistance to a variety of clinically used rifamycin antibiotics. Does not show phosphoenolpyruvate (PEP) synthase activity. In Bacillus cereus (strain ATCC 14579 / DSM 31 / CCUG 7414 / JCM 2152 / NBRC 15305 / NCIMB 9373 / NCTC 2599 / NRRL B-3711), this protein is Rifampicin phosphotransferase.